Here is a 229-residue protein sequence, read N- to C-terminus: Potassium/proton antiporter CemA (229 aa).

A run of 4 helical transmembrane segments spans residues 7–27 (FNPLLYLTSIVFLSWSISFSF), 107–127 (ILNFLTNIISFAILSVFYILG), 154–174 (ILLLTDLCIGFHSPHGWELMI), and 189–209 (IISGLVSTFPVILDTIFKYLI).

This sequence belongs to the CemA family.

The protein localises to the plastid. The protein resides in the chloroplast inner membrane. The catalysed reaction is K(+)(in) + H(+)(out) = K(+)(out) + H(+)(in). Contributes to K(+)/H(+) antiport activity by supporting proton efflux to control proton extrusion and homeostasis in chloroplasts in a light-dependent manner to modulate photosynthesis. Prevents excessive induction of non-photochemical quenching (NPQ) under continuous-light conditions. Indirectly promotes efficient inorganic carbon uptake into chloroplasts. This chain is Potassium/proton antiporter CemA, found in Ranunculus macranthus (Large buttercup).